Consider the following 390-residue polypeptide: Homoserine O-succinyltransferase (390 aa).

Positions 56–365 (NAVLICHALS…SPHGHDAFLL (310 aa)) constitute an AB hydrolase-1 domain. The Nucleophile role is filled by serine 162. Residue arginine 232 coordinates substrate. Active-site residues include aspartate 327 and histidine 360. Aspartate 361 serves as a coordination point for substrate.

It belongs to the AB hydrolase superfamily. MetX family. As to quaternary structure, homodimer.

Its subcellular location is the cytoplasm. The catalysed reaction is L-homoserine + succinyl-CoA = O-succinyl-L-homoserine + CoA. The protein operates within amino-acid biosynthesis; L-methionine biosynthesis via de novo pathway; O-succinyl-L-homoserine from L-homoserine: step 1/1. Transfers a succinyl group from succinyl-CoA to L-homoserine, forming succinyl-L-homoserine. In vitro, also has serine succinyl transferase activity. In Litchfieldella anticariensis (strain DSM 16096 / CECT 5854 / CIP 108499 / LMG 22089 / FP35) (Halomonas anticariensis), this protein is Homoserine O-succinyltransferase.